The following is a 196-amino-acid chain: Large ribosomal subunit protein eL15 (196 aa).

Residues 162 to 196 are disordered; that stretch reads RGLTNAGRSNRGLQNRGKGAEHTRPSAGSGSRRGK.

This sequence belongs to the eukaryotic ribosomal protein eL15 family.

This Haloquadratum walsbyi (strain DSM 16790 / HBSQ001) protein is Large ribosomal subunit protein eL15.